Here is a 137-residue protein sequence, read N- to C-terminus: Large ribosomal subunit protein uL16 (137 aa).

Belongs to the universal ribosomal protein uL16 family. As to quaternary structure, part of the 50S ribosomal subunit.

Its function is as follows. Binds 23S rRNA and is also seen to make contacts with the A and possibly P site tRNAs. The chain is Large ribosomal subunit protein uL16 from Bartonella quintana (strain Toulouse) (Rochalimaea quintana).